A 325-amino-acid chain; its full sequence is Probable tRNA pseudouridine synthase B (325 aa).

Catalysis depends on aspartate 71, which acts as the Nucleophile. A PUA domain is found at 238–313 (LPKIYVKDSA…VAASIERVIM (76 aa)).

It belongs to the pseudouridine synthase TruB family. Type 2 subfamily.

It catalyses the reaction uridine(55) in tRNA = pseudouridine(55) in tRNA. Its function is as follows. Could be responsible for synthesis of pseudouridine from uracil-55 in the psi GC loop of transfer RNAs. This is Probable tRNA pseudouridine synthase B from Korarchaeum cryptofilum (strain OPF8).